The sequence spans 174 residues: Translation initiation factor IF-3 (174 aa).

Belongs to the IF-3 family. Monomer.

The protein localises to the cytoplasm. IF-3 binds to the 30S ribosomal subunit and shifts the equilibrium between 70S ribosomes and their 50S and 30S subunits in favor of the free subunits, thus enhancing the availability of 30S subunits on which protein synthesis initiation begins. This chain is Translation initiation factor IF-3, found in Xanthobacter autotrophicus (strain ATCC BAA-1158 / Py2).